We begin with the raw amino-acid sequence, 587 residues long: MGYDRLGPSGPSNPNQKDPATSLPELQKKTKTKLILFTLAVLVVGVVCFGIFAGIRAVDSGKTEPKLTRKPTQAISRTCSKSLYPNLCIDTLLDFPGSLTADENELIHISFNATLQKFSKALYTSSTITYTQMPPRVRSAYDSCLELLDDSVDALTRALSSVVVVSGDESHSDVMTWLSSAMTNHDTCTDGFDEIEGQGGEVKDQVIGAVKDLSEMVSNCLAIFAGKVKDLSGVPVVNNRKLLGTEETEELPNWLKREDRELLGTPTSAIQADITVSKDGSGTFKTIAEAIKKAPEHSSRRFVIYVKAGRYEEENLKVGRKKTNLMFIGDGKGKTVITGGKSIADDLTTFHTATFAATGAGFIVRDMTFENYAGPAKHQAVALRVGGDHAVVYRCNIIGYQDALYVHSNRQFFRECEIYGTVDFIFGNAAVILQSCNIYARKPMAQQKITITAQNRKDPNQNTGISIHACKLLATPDLEASKGSYPTYLGRPWKLYSRVVYMMSDMGDHIDPRGWLEWNGPFALDSLYYGEYMNKGLGSGIGQRVKWPGYHVITSTVEASKFTVAQFISGSSWLPSTGVSFFSGLSQ.

Residues 1-23 (MGYDRLGPSGPSNPNQKDPATSL) are disordered. Residues 10–19 (GPSNPNQKDP) are compositionally biased toward polar residues. A helical membrane pass occupies residues 35–55 (ILFTLAVLVVGVVCFGIFAGI). The segment at 69-223 (RKPTQAISRT…SEMVSNCLAI (155 aa)) is pectinesterase inhibitor 61. The interval 273-571 (DITVSKDGSG…FTVAQFISGS (299 aa)) is pectinesterase 61. Substrate contacts are provided by threonine 349 and glutamine 379. Aspartate 402 serves as the catalytic Proton donor; for pectinesterase activity. Cysteine 416 and cysteine 436 are joined by a disulfide. Aspartate 423 (nucleophile; for pectinesterase activity) is an active-site residue. Positions 491 and 493 each coordinate substrate.

In the N-terminal section; belongs to the PMEI family. It in the C-terminal section; belongs to the pectinesterase family. In terms of tissue distribution, expressed in siliques, floral stems and rosettes leaves.

It is found in the membrane. It catalyses the reaction [(1-&gt;4)-alpha-D-galacturonosyl methyl ester](n) + n H2O = [(1-&gt;4)-alpha-D-galacturonosyl](n) + n methanol + n H(+). It participates in glycan metabolism; pectin degradation; 2-dehydro-3-deoxy-D-gluconate from pectin: step 1/5. Its function is as follows. Acts in the modification of cell walls via demethylesterification of cell wall pectin. This chain is Probable pectinesterase/pectinesterase inhibitor 61 (PME61), found in Arabidopsis thaliana (Mouse-ear cress).